Reading from the N-terminus, the 117-residue chain is Large ribosomal subunit protein uL22 (117 aa).

Belongs to the universal ribosomal protein uL22 family. Part of the 50S ribosomal subunit.

This protein binds specifically to 23S rRNA; its binding is stimulated by other ribosomal proteins, e.g. L4, L17, and L20. It is important during the early stages of 50S assembly. It makes multiple contacts with different domains of the 23S rRNA in the assembled 50S subunit and ribosome. Its function is as follows. The globular domain of the protein is located near the polypeptide exit tunnel on the outside of the subunit, while an extended beta-hairpin is found that lines the wall of the exit tunnel in the center of the 70S ribosome. The sequence is that of Large ribosomal subunit protein uL22 from Synechococcus elongatus (strain ATCC 33912 / PCC 7942 / FACHB-805) (Anacystis nidulans R2).